The chain runs to 112 residues: ATP synthase epsilon chain (112 aa).

Belongs to the ATPase epsilon chain family. F-type ATPases have 2 components, CF(1) - the catalytic core - and CF(0) - the membrane proton channel. CF(1) has five subunits: alpha(3), beta(3), gamma(1), delta(1), epsilon(1). CF(0) has three main subunits: a, b and c.

The protein localises to the cell inner membrane. In terms of biological role, produces ATP from ADP in the presence of a proton gradient across the membrane. This is ATP synthase epsilon chain from Rickettsia rickettsii (strain Sheila Smith).